The sequence spans 232 residues: MPESADPRDRLIVALDLPDVEAAERLVARIGDAATFYKIGYRLAYAGGLDFAARLAKSGKKTFLDLKLHDIGNTVEEGVRSASALGATFLTVHAYPQTMRAAVRGRGPGLKILAVTVLTSYDDADAAEAGYALPIADLVARRAEQAAEIGIDGIVCSAVEAGAVRHRIGPSGLIVTPGIRPAGAEAGDQKRVMTPGQARAAGIDHVVVGRPITGADDPRAVAQRIVAEMEDA.

Residues D16, K38, 65–74, T119, R180, Q189, G209, and R210 each bind substrate; that span reads DLKLHDIGNT. Residue K67 is the Proton donor of the active site.

It belongs to the OMP decarboxylase family. Type 1 subfamily. As to quaternary structure, homodimer.

The enzyme catalyses orotidine 5'-phosphate + H(+) = UMP + CO2. The protein operates within pyrimidine metabolism; UMP biosynthesis via de novo pathway; UMP from orotate: step 2/2. Its function is as follows. Catalyzes the decarboxylation of orotidine 5'-monophosphate (OMP) to uridine 5'-monophosphate (UMP). The polypeptide is Orotidine 5'-phosphate decarboxylase (Methylorubrum extorquens (strain PA1) (Methylobacterium extorquens)).